Here is a 1168-residue protein sequence, read N- to C-terminus: Transcription-repair-coupling factor (1168 aa).

A Helicase ATP-binding domain is found at 633–794; it reads DMQKSRPMDR…MLGVRDLSVI (162 aa). 646 to 653 contacts ATP; sequence GDVGYGKT. A DEEQ box motif is present at residues 747–750; the sequence is DEEQ. In terms of domain architecture, Helicase C-terminal spans 808–969; sequence VLEQNMSFIK…GFKIAMRDLN (162 aa).

In the N-terminal section; belongs to the UvrB family. This sequence in the C-terminal section; belongs to the helicase family. RecG subfamily.

The protein resides in the cytoplasm. Couples transcription and DNA repair by recognizing RNA polymerase (RNAP) stalled at DNA lesions. Mediates ATP-dependent release of RNAP and its truncated transcript from the DNA, and recruitment of nucleotide excision repair machinery to the damaged site. This chain is Transcription-repair-coupling factor, found in Staphylococcus aureus (strain USA300).